The sequence spans 246 residues: Acetoacetate decarboxylase (246 aa).

The Schiff-base intermediate with acetoacetate role is filled by lysine 116.

The protein belongs to the ADC family.

It catalyses the reaction acetoacetate + H(+) = acetone + CO2. Functionally, catalyzes the conversion of acetoacetate to acetone and carbon dioxide. In Burkholderia vietnamiensis (strain G4 / LMG 22486) (Burkholderia cepacia (strain R1808)), this protein is Acetoacetate decarboxylase.